A 126-amino-acid chain; its full sequence is Calcitonin receptor-stimulating peptide 1 (126 aa).

An N-terminal signal peptide occupies residues 1 to 25; the sequence is MGFWKFPPFLVLSILVLYQAGMFHT. The propeptide occupies 26 to 78; that stretch reads APMRSAFGSPFDPATLSEEESRLLLAAMVNDYEQMKAREMQKQRAQGSGISVQ. Cys-82 and Cys-87 are disulfide-bonded. Gly-118 bears the Glycine amide mark. The propeptide occupies 123–126; it reads NFWI.

Mainly expressed in the thyroid gland and CNS. Found in the nerve cells of cerebrum, hippocampus, hypothalamus, pons/midbrain and thalamus.

It is found in the secreted. Functionally, stimulates cAMP production in porcine kidney cell line LLC-PK1 via the calcitonin receptor (CT) but not via the CT-like (CL) receptor. This is Calcitonin receptor-stimulating peptide 1 (CRSP1) from Sus scrofa (Pig).